We begin with the raw amino-acid sequence, 485 residues long: ATP synthase subunit beta (485 aa).

Positions 1–11 are enriched in basic and acidic residues; sequence MPATETADKNT. The tract at residues 1-20 is disordered; the sequence is MPATETADKNTKSANSDTSG. 170 to 177 is a binding site for ATP; sequence GGAGVGKT.

Belongs to the ATPase alpha/beta chains family. In terms of assembly, F-type ATPases have 2 components, CF(1) - the catalytic core - and CF(0) - the membrane proton channel. CF(1) has five subunits: alpha(3), beta(3), gamma(1), delta(1), epsilon(1). CF(0) has three main subunits: a(1), b(2) and c(9-12). The alpha and beta chains form an alternating ring which encloses part of the gamma chain. CF(1) is attached to CF(0) by a central stalk formed by the gamma and epsilon chains, while a peripheral stalk is formed by the delta and b chains.

The protein localises to the cell membrane. It catalyses the reaction ATP + H2O + 4 H(+)(in) = ADP + phosphate + 5 H(+)(out). Functionally, produces ATP from ADP in the presence of a proton gradient across the membrane. The catalytic sites are hosted primarily by the beta subunits. This chain is ATP synthase subunit beta, found in Mycolicibacterium paratuberculosis (strain ATCC BAA-968 / K-10) (Mycobacterium paratuberculosis).